A 425-amino-acid polypeptide reads, in one-letter code: MDQLTSAARLMIVSDLDHTMVDHHDPENLSLLRFNALWEANYRENSLLVFSTGRSPTLYKELRKEKPMLTPDITIMSVGTEITYGNSMEPDDGWEAFLNDKWDRKIVTEETSKFPELTLQSETEQRPHKVSFYVQKDKAQDITGTLSKRLEERGLDVKIIYSGGMDLDILPQGAGKGRALAYLLKKLKSEGKLPNNTLACGDSGNDAELFSIPDVYGVMVANAQEELLQWRAANAKDSPKVIHATERCAAGIIQAIGHFNLGPNTSPRDVTDMSDCKMENFVPAYEVVKFYLFFEKWRRGEIENSDLHLSNLKAVCRPSGTFVHPSGVEKYLEDCINTLRTCHGDKQGKQFRIWVDLVLPTQVGSDSWLVSFKKWELCGEERQCCITTVLLSSKNVTVADGLTWTHVHQTWLQGAAASDSASWFF.

This sequence belongs to the sucrose phosphatase family. Homodimer. The cofactor is Mg(2+).

It carries out the reaction sucrose 6(F)-phosphate + H2O = sucrose + phosphate. It functions in the pathway glycan biosynthesis; sucrose biosynthesis; sucrose from D-fructose 6-phosphate and UDP-alpha-D-glucose: step 2/2. Inhibited by EDTA. Functionally, catalyzes the final step of sucrose synthesis. The polypeptide is Sucrose-phosphatase 1 (SPP1) (Nicotiana tabacum (Common tobacco)).